The following is a 312-amino-acid chain: Ribosomal RNA small subunit methyltransferase H (312 aa).

S-adenosyl-L-methionine contacts are provided by residues 30 to 32, Asp50, Phe80, Asp98, and Gln105; that span reads GGH.

Belongs to the methyltransferase superfamily. RsmH family.

The protein localises to the cytoplasm. It catalyses the reaction cytidine(1402) in 16S rRNA + S-adenosyl-L-methionine = N(4)-methylcytidine(1402) in 16S rRNA + S-adenosyl-L-homocysteine + H(+). Specifically methylates the N4 position of cytidine in position 1402 (C1402) of 16S rRNA. In Lawsonia intracellularis (strain PHE/MN1-00), this protein is Ribosomal RNA small subunit methyltransferase H.